Here is a 452-residue protein sequence, read N- to C-terminus: Maltoporin (452 aa).

An N-terminal signal peptide occupies residues 1–25; sequence MMITLRKLPLAVAVAAGVMSAQAMA.

This sequence belongs to the porin LamB (TC 1.B.3) family. As to quaternary structure, homotrimer formed of three 18-stranded antiparallel beta-barrels, containing three independent channels.

The protein resides in the cell outer membrane. It catalyses the reaction beta-maltose(in) = beta-maltose(out). In terms of biological role, involved in the transport of maltose and maltodextrins. In Salmonella enteritidis PT4 (strain P125109), this protein is Maltoporin.